The following is a 792-amino-acid chain: Probable exo-1,4-beta-xylosidase xlnD (792 aa).

An N-terminal signal peptide occupies residues 1–20; the sequence is MSVAKSIAAVLVALLPGALA. 5 N-linked (GlcNAc...) asparagine glycosylation sites follow: Asn23, Asn87, Asn118, Asn142, and Asn246. The active site involves Asp310. N-linked (GlcNAc...) asparagine glycans are attached at residues Asn326, Asn385, Asn404, Asn440, Asn477, Asn518, Asn679, and Asn701.

This sequence belongs to the glycosyl hydrolase 3 family.

It is found in the secreted. The enzyme catalyses Hydrolysis of (1-&gt;4)-beta-D-xylans, to remove successive D-xylose residues from the non-reducing termini.. It functions in the pathway glycan degradation; xylan degradation. In terms of biological role, xylan 1,4-beta-xylosidase involved in the hydrolysis of xylan, a major structural heterogeneous polysaccharide found in plant biomass representing the second most abundant polysaccharide in the biosphere, after cellulose. The chain is Probable exo-1,4-beta-xylosidase xlnD (xlnD) from Aspergillus fumigatus (strain ATCC MYA-4609 / CBS 101355 / FGSC A1100 / Af293) (Neosartorya fumigata).